Here is a 610-residue protein sequence, read N- to C-terminus: POU domain, class 6, transcription factor 1 (610 aa).

The disordered stretch occupies residues 55–87 (SSAGAAESGGDEEGSGQSLEATEEAQLDGPVTT). The POU-specific domain occupies 448–522 (EEAINLEEIR…VLERWLAEAE (75 aa)). Positions 543 to 602 (KRKRRTSFTPQAIEVLNTYFEKNSLPTGQEITEIAKELNYDREVVRVWFCNRRQTLKNTS) form a DNA-binding region, homeobox.

This sequence belongs to the POU transcription factor family. Class-6 subfamily. As to expression, ubiquitously expressed during embryogenesis.

It is found in the nucleus. In terms of biological role, transcription factor that binds with high affinity to the motif 5'-TAATGARAT-3'. In Danio rerio (Zebrafish), this protein is POU domain, class 6, transcription factor 1 (pou6f1).